The chain runs to 133 residues: Ribosome-binding factor A (133 aa).

The protein belongs to the RbfA family. In terms of assembly, monomer. Binds 30S ribosomal subunits, but not 50S ribosomal subunits or 70S ribosomes.

Its subcellular location is the cytoplasm. Functionally, one of several proteins that assist in the late maturation steps of the functional core of the 30S ribosomal subunit. Associates with free 30S ribosomal subunits (but not with 30S subunits that are part of 70S ribosomes or polysomes). Required for efficient processing of 16S rRNA. May interact with the 5'-terminal helix region of 16S rRNA. This Pseudomonas fluorescens (strain ATCC BAA-477 / NRRL B-23932 / Pf-5) protein is Ribosome-binding factor A.